The sequence spans 82 residues: Small ribosomal subunit protein bS18 (82 aa).

Positions 1–21 (MKRNNSKKVRVEPTRRPKKNP) are disordered.

It belongs to the bacterial ribosomal protein bS18 family. Part of the 30S ribosomal subunit. Forms a tight heterodimer with protein bS6.

Binds as a heterodimer with protein bS6 to the central domain of the 16S rRNA, where it helps stabilize the platform of the 30S subunit. The sequence is that of Small ribosomal subunit protein bS18 from Corynebacterium kroppenstedtii (strain DSM 44385 / JCM 11950 / CIP 105744 / CCUG 35717).